The sequence spans 138 residues: Cell division protein SepF (138 aa).

The segment at 1–59 is disordered; that stretch reads MNNKFKDFFGFGDNDSYEERDAYEEHYDEQEEMQNSNRPTNSRDSNVVSIKAGQAGSGP. Over residues 33-48 the composition is skewed to polar residues; the sequence is MQNSNRPTNSRDSNVV.

Belongs to the SepF family. In terms of assembly, homodimer. Interacts with FtsZ.

The protein localises to the cytoplasm. In terms of biological role, cell division protein that is part of the divisome complex and is recruited early to the Z-ring. Probably stimulates Z-ring formation, perhaps through the cross-linking of FtsZ protofilaments. Its function overlaps with FtsA. This chain is Cell division protein SepF, found in Lactobacillus delbrueckii subsp. bulgaricus (strain ATCC 11842 / DSM 20081 / BCRC 10696 / JCM 1002 / NBRC 13953 / NCIMB 11778 / NCTC 12712 / WDCM 00102 / Lb 14).